The sequence spans 177 residues: Large ribosomal subunit protein uL6 (177 aa).

It belongs to the universal ribosomal protein uL6 family. In terms of assembly, part of the 50S ribosomal subunit.

Its function is as follows. This protein binds to the 23S rRNA, and is important in its secondary structure. It is located near the subunit interface in the base of the L7/L12 stalk, and near the tRNA binding site of the peptidyltransferase center. The chain is Large ribosomal subunit protein uL6 from Rhodospirillum centenum (strain ATCC 51521 / SW).